Reading from the N-terminus, the 212-residue chain is Ras-related protein Rab-15 (212 aa).

Ser17, Gly18, Val19, Gly20, Lys21, Thr22, Cys23, Ser35, Ser39, and Thr40 together coordinate GTP. Thr22 contributes to the Mg(2+) binding site. Short sequence motifs (switch) lie at residues 31–45 (NEFHSSHISTIGVDF) and 63–80 (DTAGQERYQTITKQYYRR). Mg(2+)-binding residues include Thr40 and Asp63. Positions 66, 121, 122, 124, 151, and 152 each coordinate GTP. The tract at residues 192–212 (ELEEDEGKPEGPANSSKTCWC) is disordered. S-geranylgeranyl cysteine attachment occurs at residues Cys210 and Cys212. The residue at position 212 (Cys212) is a Cysteine methyl ester.

It belongs to the small GTPase superfamily. Rab family. As to quaternary structure, the GTP bound form of RAB15 interacts with REP15. Interacts (GTP-bound form) with MICAL1, MICAL3, MICALCL, EHBP1 and EHBP1L1. Requires Mg(2+) as cofactor.

The protein resides in the cell membrane. It carries out the reaction GTP + H2O = GDP + phosphate + H(+). Regulated by guanine nucleotide exchange factors (GEFs) which promote the exchange of bound GDP for free GTP. Regulated by GTPase activating proteins (GAPs) which increase the GTP hydrolysis activity. Inhibited by GDP dissociation inhibitors (GDIs). In terms of biological role, the small GTPases Rab are key regulators of intracellular membrane trafficking, from the formation of transport vesicles to their fusion with membranes. Rabs cycle between an inactive GDP-bound form and an active GTP-bound form that is able to recruit to membranes different sets of downstream effectors directly responsible for vesicle formation, movement, tethering and fusion. RAB15 may act in concert with RAB3A in regulating aspects of synaptic vesicle membrane flow within the nerve terminal. This Bos taurus (Bovine) protein is Ras-related protein Rab-15 (RAB15).